Here is a 116-residue protein sequence, read N- to C-terminus: Large ribosomal subunit protein bL19 (116 aa).

The protein belongs to the bacterial ribosomal protein bL19 family.

Functionally, this protein is located at the 30S-50S ribosomal subunit interface and may play a role in the structure and function of the aminoacyl-tRNA binding site. In Streptomyces lividans, this protein is Large ribosomal subunit protein bL19 (rplS).